Reading from the N-terminus, the 349-residue chain is Draxin (349 aa).

A signal peptide spans Met1–Ala25. Disordered regions lie at residues Pro38 to Ala79, Pro118 to Arg145, and Asp244 to Pro273. Basic and acidic residues predominate over residues Pro120–Arg131. Composition is skewed to basic residues over residues Thr132 to Arg145 and Ala249 to Lys258. Asn264 carries N-linked (GlcNAc...) asparagine glycosylation.

Belongs to the draxin family. As to quaternary structure, interacts with LRP6.

Its subcellular location is the secreted. Functionally, chemorepulsive axon guidance protein required for the development of spinal cord and forebrain commissures. Acts as a chemorepulsive guidance protein for commissural axons during development. Able to inhibit or repel neurite outgrowth from dorsal spinal cord. Inhibits the stabilization of cytosolic beta-catenin (CTNNB1) via its interaction with LRP6, thereby acting as an antagonist of Wnt signaling pathway. The chain is Draxin from Homo sapiens (Human).